Consider the following 368-residue polypeptide: tRNA-specific 2-thiouridylase MnmA (368 aa).

ATP-binding positions include G11–S18 and M37. Residues N97–D99 form an interaction with target base in tRNA region. Catalysis depends on C102, which acts as the Nucleophile. C102 and C199 form a disulfide bridge. Residue G127 participates in ATP binding. The segment at K149–Q151 is interaction with tRNA. Residue C199 is the Cysteine persulfide intermediate of the active site. Positions R311–Y312 are interaction with tRNA.

Belongs to the MnmA/TRMU family. In terms of assembly, interacts with TusE.

Its subcellular location is the cytoplasm. It carries out the reaction S-sulfanyl-L-cysteinyl-[protein] + uridine(34) in tRNA + AH2 + ATP = 2-thiouridine(34) in tRNA + L-cysteinyl-[protein] + A + AMP + diphosphate + H(+). Catalyzes the 2-thiolation of uridine at the wobble position (U34) of tRNA(Lys), tRNA(Glu) and tRNA(Gln), leading to the formation of s(2)U34, the first step of tRNA-mnm(5)s(2)U34 synthesis. Sulfur is provided by IscS, via a sulfur-relay system. Binds ATP and its substrate tRNAs. This Klebsiella pneumoniae subsp. pneumoniae (strain ATCC 700721 / MGH 78578) protein is tRNA-specific 2-thiouridylase MnmA.